The chain runs to 57 residues: Large ribosomal subunit protein uL30 (57 aa).

The protein belongs to the universal ribosomal protein uL30 family. Part of the 50S ribosomal subunit.

This Acholeplasma laidlawii (strain PG-8A) protein is Large ribosomal subunit protein uL30.